A 328-amino-acid polypeptide reads, in one-letter code: MRIAVFGAGAWGTALALAFSARHDVVLWGRDAGHIDTLAATRHNERYLPGVPFPEELALTADFAAAARAADLHLVVTPLAGLRAAVGELNTLQPDTPLIWACKGLEAGTGKLPHEIVAEELGPAARCGVLTGPSFAAEVARAMPTAVTLAATDPAFARRWVPALHQPRLRIYANSDLVGAEIGGAIKNVLAIAAGVSDGMGFGLNARAALITRGLAEIARLAEALGGRPETLMGLAGMGDLILTCTGDLSRNRRVGLALAQGKTLAEILGELGHVAEGVSTAREVVKLAARHDVEMPLCEAVDTLLHDARLGPREVVEQLLSREPRRE.

NADPH is bound by residues tryptophan 11, arginine 30, and lysine 103. The sn-glycerol 3-phosphate site is built by lysine 103, glycine 132, and serine 134. Residue alanine 136 participates in NADPH binding. Lysine 187, aspartate 240, serine 250, arginine 251, and asparagine 252 together coordinate sn-glycerol 3-phosphate. Catalysis depends on lysine 187, which acts as the Proton acceptor. NADPH is bound at residue arginine 251. The NADPH site is built by valine 275 and glutamate 277.

It belongs to the NAD-dependent glycerol-3-phosphate dehydrogenase family.

It is found in the cytoplasm. The catalysed reaction is sn-glycerol 3-phosphate + NAD(+) = dihydroxyacetone phosphate + NADH + H(+). It carries out the reaction sn-glycerol 3-phosphate + NADP(+) = dihydroxyacetone phosphate + NADPH + H(+). It participates in membrane lipid metabolism; glycerophospholipid metabolism. Catalyzes the reduction of the glycolytic intermediate dihydroxyacetone phosphate (DHAP) to sn-glycerol 3-phosphate (G3P), the key precursor for phospholipid synthesis. This chain is Glycerol-3-phosphate dehydrogenase [NAD(P)+], found in Aromatoleum aromaticum (strain DSM 19018 / LMG 30748 / EbN1) (Azoarcus sp. (strain EbN1)).